A 529-amino-acid chain; its full sequence is tRNA-2-methylthio-N(6)-dimethylallyladenosine synthase (529 aa).

Positions 18 to 134 (RTYQVRTYGC…LPTLLERARH (117 aa)) constitute an MTTase N-terminal domain. 6 residues coordinate [4Fe-4S] cluster: C27, C63, C97, C171, C175, and C178. A Radical SAM core domain is found at 157-404 (RESAYAGWVS…IELQERISLE (248 aa)). One can recognise a TRAM domain in the interval 407–486 (QAQVGRTLEL…PHHLIADGAL (80 aa)).

The protein belongs to the methylthiotransferase family. MiaB subfamily. In terms of assembly, monomer. It depends on [4Fe-4S] cluster as a cofactor.

The protein resides in the cytoplasm. It catalyses the reaction N(6)-dimethylallyladenosine(37) in tRNA + (sulfur carrier)-SH + AH2 + 2 S-adenosyl-L-methionine = 2-methylsulfanyl-N(6)-dimethylallyladenosine(37) in tRNA + (sulfur carrier)-H + 5'-deoxyadenosine + L-methionine + A + S-adenosyl-L-homocysteine + 2 H(+). In terms of biological role, catalyzes the methylthiolation of N6-(dimethylallyl)adenosine (i(6)A), leading to the formation of 2-methylthio-N6-(dimethylallyl)adenosine (ms(2)i(6)A) at position 37 in tRNAs that read codons beginning with uridine. This is tRNA-2-methylthio-N(6)-dimethylallyladenosine synthase from Mycobacterium sp. (strain KMS).